The following is a 1135-amino-acid chain: Integrin alpha-7 (1135 aa).

An N-terminal signal peptide occupies residues 1–33 (MARIPRCDFLGLPGICYLLSFLLAGLLLPRASA). Residues 34 to 1036 (FNLDVMGAIR…VAVVAEGVPW (1003 aa)) are Extracellular-facing. FG-GAP repeat units follow at residues 38–103 (VMGA…ETDC), 110–165 (RGAN…RCFV), 185–238 (EGRP…DPDQ), 248–305 (DRLT…ASRL), 306–367 (IPEV…HWAD), 368–423 (ISPL…GVVT), and 427–486 (QVLE…IDPR). The N-linked (GlcNAc...) asparagine glycan is linked to Asn86. Disulfide bonds link Cys94–Cys103, Cys140–Cys163, and Cys184–Cys197. Ca(2+) contacts are provided by Asp328, Asn330, Asp332, Asp336, Asp390, Asn392, Asp394, Asp398, Asp448, Asp450, Asn452, Tyr454, and Asp456. 6 disulfide bridges follow: Cys495–Cys502, Cys508–Cys571, Cys637–Cys643, Cys736–Cys747, Cys894–Cys948, and Cys955–Cys960. An N-linked (GlcNAc...) asparagine glycan is attached at Asn741. A compositionally biased stretch (basic and acidic residues) spans 905 to 916 (VDSRDRRRRELG). The disordered stretch occupies residues 905-933 (VDSRDRRRRELGQPEPQEPPEKVEPSTSW). N-linked (GlcNAc...) asparagine glycosylation occurs at Asn943. 2 N-linked (GlcNAc...) asparagine glycosylation sites follow: Asn979 and Asn999. A helical transmembrane segment spans residues 1037–1057 (WVILLAVLAGLLVLALLVLLL). Residues 1058–1135 (WKLGFFKRAK…PDGHPVSVTA (78 aa)) are Cytoplasmic-facing. Residues 1061 to 1065 (GFFKR) carry the GFFKR motif motif. 3 tandem repeats follow at residues 1111 to 1114 (DAHP), 1119 to 1122 (DWHP), and 1127 to 1130 (DGHP). The interval 1111 to 1130 (DAHPILAADWHPELGPDGHP) is 3 X 4 AA repeats of D-X-H-P.

This sequence belongs to the integrin alpha chain family. Interacts (via C-terminus intracellular tail region) with CIB1; the interaction is stabilized/increased in a calcium- and magnesium-dependent manner. Heterodimer of an alpha and a beta subunit. The alpha subunit is composed of a heavy and a light chain linked by a disulfide bond. Alpha-7 associates with beta-1. Interacts with COMP. In terms of processing, ADP-ribosylated on at least two sites of the extracellular domain in skeletal myotubes. Post-translationally, a 70 kDa form is created by proteolytic cleavage. Cleavage is elevated during myogenic differentiation and the cleaved form enhances cell adhesion and spreading on laminin. In terms of tissue distribution, expressed in skeletal and cardiac muscle. Expressed in replicating myoblasts. In differentiated muscle fibers localizes between fibers and the surrounding matrix. Isoform Alpha-7X1A and isoform Alpha-7X1B are expressed at myotendinous and neuromuscular junctions; isoform Alpha-7X1C is expressed at neuromuscular junctions and at extrasynaptic sites.

The protein localises to the membrane. Functionally, integrin alpha-7/beta-1 is the primary laminin receptor on skeletal myoblasts and adult myofibers. During myogenic differentiation, it may induce changes in the shape and mobility of myoblasts, and facilitate their localization at laminin-rich sites of secondary fiber formation. Involved in the maintenance of the myofibers cytoarchitecture as well as for their anchorage, viability and functional integrity. Required to promote contractile phenotype acquisition in differentiated airway smooth muscle (ASM) cells. Acts as a Schwann cell receptor for laminin-2. Acts as a receptor of COMP and mediates its effect on vascular smooth muscle cells (VSMCs) maturation. The sequence is that of Integrin alpha-7 (Itga7) from Rattus norvegicus (Rat).